A 235-amino-acid polypeptide reads, in one-letter code: Large ribosomal subunit protein uL1 (235 aa).

This sequence belongs to the universal ribosomal protein uL1 family. In terms of assembly, part of the 50S ribosomal subunit.

Its function is as follows. Binds directly to 23S rRNA. The L1 stalk is quite mobile in the ribosome, and is involved in E site tRNA release. In terms of biological role, protein L1 is also a translational repressor protein, it controls the translation of the L11 operon by binding to its mRNA. This Synechococcus sp. (strain CC9311) protein is Large ribosomal subunit protein uL1.